We begin with the raw amino-acid sequence, 157 residues long: Nucleoside diphosphate kinase (157 aa).

Residues lysine 12, phenylalanine 60, arginine 88, threonine 94, and arginine 105 each contribute to the ATP site. The active-site Pros-phosphohistidine intermediate is the histidine 121.

This sequence belongs to the NDK family. Mg(2+) is required as a cofactor.

The protein resides in the cytoplasm. The enzyme catalyses a 2'-deoxyribonucleoside 5'-diphosphate + ATP = a 2'-deoxyribonucleoside 5'-triphosphate + ADP. It catalyses the reaction a ribonucleoside 5'-diphosphate + ATP = a ribonucleoside 5'-triphosphate + ADP. Functionally, major role in the synthesis of nucleoside triphosphates other than ATP. The ATP gamma phosphate is transferred to the NDP beta phosphate via a ping-pong mechanism, using a phosphorylated active-site intermediate. The protein is Nucleoside diphosphate kinase of Pyrococcus horikoshii (strain ATCC 700860 / DSM 12428 / JCM 9974 / NBRC 100139 / OT-3).